A 354-amino-acid chain; its full sequence is Uroporphyrinogen decarboxylase (354 aa).

Substrate is bound by residues 28 to 32, Asp-78, Tyr-155, Ser-210, and His-325; that span reads RQAGR.

The protein belongs to the uroporphyrinogen decarboxylase family. As to quaternary structure, homodimer.

The protein localises to the cytoplasm. It catalyses the reaction uroporphyrinogen III + 4 H(+) = coproporphyrinogen III + 4 CO2. It participates in porphyrin-containing compound metabolism; protoporphyrin-IX biosynthesis; coproporphyrinogen-III from 5-aminolevulinate: step 4/4. Functionally, catalyzes the decarboxylation of four acetate groups of uroporphyrinogen-III to yield coproporphyrinogen-III. This is Uroporphyrinogen decarboxylase from Crocosphaera subtropica (strain ATCC 51142 / BH68) (Cyanothece sp. (strain ATCC 51142)).